The following is a 558-amino-acid chain: Urocanate hydratase (558 aa).

NAD(+) is bound by residues 54-55, Q132, 178-180, E198, 244-245, 265-269, 275-276, and Y324; these read GG, GMG, NA, QTSAH, and YL. Residue C412 is part of the active site. Position 494 (G494) interacts with NAD(+).

Belongs to the urocanase family. The cofactor is NAD(+).

It localises to the cytoplasm. The enzyme catalyses 4-imidazolone-5-propanoate = trans-urocanate + H2O. It participates in amino-acid degradation; L-histidine degradation into L-glutamate; N-formimidoyl-L-glutamate from L-histidine: step 2/3. Its function is as follows. Catalyzes the conversion of urocanate to 4-imidazolone-5-propionate. The chain is Urocanate hydratase from Acinetobacter baumannii (strain ACICU).